Here is a 521-residue protein sequence, read N- to C-terminus: Nitric oxide reductase transcription regulator NorR2 (521 aa).

Residue D56 is modified to 4-aspartylphosphate. One can recognise a Sigma-54 factor interaction domain in the interval 193-422 (IIGQSEAIAN…LEHVISRAAL (230 aa)). ATP contacts are provided by residues 221–228 (GETGVGKE) and 293–302 (EVGELPLAIQ). The H-T-H motif DNA-binding region spans 497–516 (WAQAARQLGIDASNLHKLAR).

Its pathway is nitrogen metabolism; nitrate reduction (denitrification) [regulation]. In terms of biological role, required for the nitric oxide (NO) induced expression of NO reductase. Not required for expression of 2 other pathway members, nitrate reductase (nirS) and nitrous oxide reductase (nosZ). This is Nitric oxide reductase transcription regulator NorR2 (norR2) from Cupriavidus necator (strain ATCC 17699 / DSM 428 / KCTC 22496 / NCIMB 10442 / H16 / Stanier 337) (Ralstonia eutropha).